Consider the following 203-residue polypeptide: Endo-type membrane-bound lytic murein transglycosylase A (203 aa).

The first 15 residues, 1–15, serve as a signal peptide directing secretion; that stretch reads MKLRWFAFLIVLLAG. A lipid anchor (N-palmitoyl cysteine) is attached at Cys-16. Cys-16 carries the S-diacylglycerol cysteine lipid modification.

Belongs to the transglycosylase Slt family.

It is found in the cell outer membrane. It catalyses the reaction Endolytic cleavage of the (1-&gt;4)-beta-glycosidic linkage between N-acetylmuramic acid (MurNAc) and N-acetylglucosamine (GlcNAc) residues in peptidoglycan with concomitant formation of a 1,6-anhydrobond in the MurNAc residue.. Functionally, murein-degrading enzyme. May play a role in recycling of muropeptides during cell elongation and/or cell division. Preferentially cleaves at a distance of more than two disaccharide units from the ends of the glycan chain. The polypeptide is Endo-type membrane-bound lytic murein transglycosylase A (Shigella boydii serotype 4 (strain Sb227)).